Consider the following 159-residue polypeptide: Probable E3 ubiquitin-protein ligase RHA1A (159 aa).

An RING-type; atypical zinc finger spans residues 86-130 (CTVCLSDFESDDKVRQLPKCGHVFHHYCLDRWIVDYNKMKCPVCR).

As to expression, predominantly expressed in stems.

It carries out the reaction S-ubiquitinyl-[E2 ubiquitin-conjugating enzyme]-L-cysteine + [acceptor protein]-L-lysine = [E2 ubiquitin-conjugating enzyme]-L-cysteine + N(6)-ubiquitinyl-[acceptor protein]-L-lysine.. It functions in the pathway protein modification; protein ubiquitination. Its function is as follows. Probable E3 ubiquitin-protein ligase that may possess E3 ubiquitin ligase activity in vitro. The protein is Probable E3 ubiquitin-protein ligase RHA1A of Arabidopsis thaliana (Mouse-ear cress).